The primary structure comprises 210 residues: Probable molybdenum cofactor guanylyltransferase (210 aa).

GTP contacts are provided by residues 18–20 (LAG), K31, N59, D86, and D111. A Mg(2+)-binding site is contributed by D111.

It belongs to the MobA family. Mg(2+) is required as a cofactor.

The protein localises to the cytoplasm. It carries out the reaction Mo-molybdopterin + GTP + H(+) = Mo-molybdopterin guanine dinucleotide + diphosphate. In terms of biological role, transfers a GMP moiety from GTP to Mo-molybdopterin (Mo-MPT) cofactor (Moco or molybdenum cofactor) to form Mo-molybdopterin guanine dinucleotide (Mo-MGD) cofactor. The sequence is that of Probable molybdenum cofactor guanylyltransferase (nasC) from Haloferax mediterranei (strain ATCC 33500 / DSM 1411 / JCM 8866 / NBRC 14739 / NCIMB 2177 / R-4) (Halobacterium mediterranei).